Here is a 936-residue protein sequence, read N- to C-terminus: Bifunctional uridylyltransferase/uridylyl-removing enzyme (936 aa).

The segment at 1–372 (MTIPRIRQPR…SIATLLMRKR (372 aa)) is uridylyltransferase. Positions 373–727 (NLGDFVLDGG…VLPDPERAVS (355 aa)) are uridylyl-removing. The HD domain maps to 488–610 (TDEHTIRAIG…VQSVERLHLL (123 aa)). 2 ACT domains span residues 728 to 809 (EVLV…KALR) and 840 to 915 (VIEI…TVPR). A compositionally biased stretch (basic and acidic residues) spans 915-930 (RKVEEGAEQGAEKADA). The tract at residues 915 to 936 (RKVEEGAEQGAEKADAGEIVAA) is disordered.

The protein belongs to the GlnD family. Requires Mg(2+) as cofactor.

The enzyme catalyses [protein-PII]-L-tyrosine + UTP = [protein-PII]-uridylyl-L-tyrosine + diphosphate. The catalysed reaction is [protein-PII]-uridylyl-L-tyrosine + H2O = [protein-PII]-L-tyrosine + UMP + H(+). With respect to regulation, uridylyltransferase (UTase) activity is inhibited by glutamine, while glutamine activates uridylyl-removing (UR) activity. Modifies, by uridylylation and deuridylylation, the PII regulatory proteins (GlnB and homologs), in response to the nitrogen status of the cell that GlnD senses through the glutamine level. Under low glutamine levels, catalyzes the conversion of the PII proteins and UTP to PII-UMP and PPi, while under higher glutamine levels, GlnD hydrolyzes PII-UMP to PII and UMP (deuridylylation). Thus, controls uridylylation state and activity of the PII proteins, and plays an important role in the regulation of nitrogen fixation and metabolism. The sequence is that of Bifunctional uridylyltransferase/uridylyl-removing enzyme from Rhodospirillum rubrum (strain ATCC 11170 / ATH 1.1.1 / DSM 467 / LMG 4362 / NCIMB 8255 / S1).